The primary structure comprises 523 residues: Major facilitator-type transporter psiT2 (523 aa).

The span at M1 to S26 shows a compositional bias: polar residues. Residues M1–T45 are disordered. The next 5 membrane-spanning stretches (helical) occupy residues F88–L108, A125–L145, V149–T169, A175–I195, and F221–F241. Residue N269 is glycosylated (N-linked (GlcNAc...) asparagine). Helical transmembrane passes span F317–V337, A352–L372, and H382–A402. The N-linked (GlcNAc...) asparagine glycan is linked to N410. Helical transmembrane passes span G419–F439, L455–P474, and N488–W508.

This sequence belongs to the major facilitator superfamily. TCR/Tet family.

Its subcellular location is the membrane. Major facilitator-type transporter; part of the gene cluster that mediates the biosynthesis of psilocybin, a psychotropic tryptamine-derived natural product. The sequence is that of Major facilitator-type transporter psiT2 from Psilocybe cubensis (Psychedelic mushroom).